The chain runs to 1020 residues: LLGL scribble cell polarity complex component 2 (1020 aa).

WD repeat units lie at residues Ser36–Leu69, Val76–Phe117, Val132–Ile169, Thr193–Phe227, Leu233–Pro264, Ala282–Glu324, Ile332–Leu364, Thr386–Ser462, Gln506–Val581, Thr590–Ser651, Val710–Gln766, Gly775–Lys827, Leu832–Pro884, and Val898–Thr921. Residues Leu935 to Tyr968 form a disordered region. The segment covering Val946 to Ser965 has biased composition (basic and acidic residues).

It belongs to the WD repeat L(2)GL family. In terms of processing, phosphorylated.

It localises to the cytoplasm. Its subcellular location is the cytoskeleton. Functionally, essential for hemidesmosome formation and maintenance of the cytoskeleton elements as well as cellular morphology in the basal epidermis during development. Also involved in regulating growth of the basal epidermis. In Danio rerio (Zebrafish), this protein is LLGL scribble cell polarity complex component 2 (llgl2).